A 404-amino-acid chain; its full sequence is Probable tRNA sulfurtransferase (404 aa).

The THUMP domain occupies 60-165; it reads TAVAESLKQV…EEAAYLSYET (106 aa). Residues 183–184, 208–209, arginine 265, glycine 287, and glutamine 296 each bind ATP; these read ML and HF.

This sequence belongs to the ThiI family.

Its subcellular location is the cytoplasm. The enzyme catalyses [ThiI sulfur-carrier protein]-S-sulfanyl-L-cysteine + a uridine in tRNA + 2 reduced [2Fe-2S]-[ferredoxin] + ATP + H(+) = [ThiI sulfur-carrier protein]-L-cysteine + a 4-thiouridine in tRNA + 2 oxidized [2Fe-2S]-[ferredoxin] + AMP + diphosphate. It catalyses the reaction [ThiS sulfur-carrier protein]-C-terminal Gly-Gly-AMP + S-sulfanyl-L-cysteinyl-[cysteine desulfurase] + AH2 = [ThiS sulfur-carrier protein]-C-terminal-Gly-aminoethanethioate + L-cysteinyl-[cysteine desulfurase] + A + AMP + 2 H(+). It functions in the pathway cofactor biosynthesis; thiamine diphosphate biosynthesis. In terms of biological role, catalyzes the ATP-dependent transfer of a sulfur to tRNA to produce 4-thiouridine in position 8 of tRNAs, which functions as a near-UV photosensor. Also catalyzes the transfer of sulfur to the sulfur carrier protein ThiS, forming ThiS-thiocarboxylate. This is a step in the synthesis of thiazole, in the thiamine biosynthesis pathway. The sulfur is donated as persulfide by IscS. In Streptococcus pneumoniae (strain 70585), this protein is Probable tRNA sulfurtransferase.